The chain runs to 265 residues: Serine protease ami (265 aa).

The signal sequence occupies residues 1 to 21 (MNVSWALLAVVLVLTVATYEC). An N-linked (GlcNAc...) asparagine glycan is attached at N2. Residues 22-26 (RPRGR) constitute a propeptide, activation peptide. Residues 27–254 (ILGGQDSKAE…YKSWIMESMY (228 aa)) form the Peptidase S1 domain. Cysteines 52 and 68 form a disulfide. H67 acts as the Charge relay system in catalysis. 3 N-linked (GlcNAc...) asparagine glycosylation sites follow: N71, N74, and N108. D115 serves as the catalytic Charge relay system. Intrachain disulfides connect C149/C215, C180/C196, and C205/C230. S209 serves as the catalytic Charge relay system. An N-linked (GlcNAc...) asparagine glycan is attached at N255.

It belongs to the peptidase S1 family.

The protein localises to the secreted. Functionally, probable serine protease. This chain is Serine protease ami, found in Xenopus tropicalis (Western clawed frog).